Here is a 335-residue protein sequence, read N- to C-terminus: Acyl-CoA Delta(11) desaturase (335 aa).

3 helical membrane-spanning segments follow: residues 39–59, 64–84, and 98–118; these read LLTF…CFTS, TIIL…AGAH, and LQII…IHWI. The Histidine box-1 motif lies at 84–89; it reads HRLWAH. The short motif at 121–125 is the Histidine box-2 element; it reads HRMHH. The next 2 helical transmembrane spans lie at 182 to 202 and 213 to 235; these read AIPF…MYFW and TMLR…HLYG. The short motif at 261–265 is the Histidine box-3 element; that stretch reads HNYHH. The interval 312-335 is disordered; that stretch reads MKRTGDGTDVSGQKYSCESSEVLQ. Over residues 321–335 the composition is skewed to polar residues; sequence VSGQKYSCESSEVLQ.

The protein belongs to the fatty acid desaturase type 1 family. Requires Fe cation as cofactor. Detected in pheromone gland.

It localises to the membrane. The catalysed reaction is an 11,12-saturated fatty acyl-CoA + 2 Fe(II)-[cytochrome b5] + O2 + 2 H(+) = an (11Z)-Delta(11)-fatty acyl-CoA + 2 Fe(III)-[cytochrome b5] + 2 H2O. Catalyzes the formation of Delta(11) fatty acyl precursors in the pheromone gland, with a preference for myristic acid. The sequence is that of Acyl-CoA Delta(11) desaturase from Choristoneura rosaceana (Oblique banded leafroller).